The sequence spans 486 residues: Protein nucleotidyltransferase YdiU (486 aa).

ATP-binding residues include Gly-90, Gly-92, Arg-93, Lys-113, Asp-125, Gly-126, Arg-176, and Arg-183. Residue Asp-252 is the Proton acceptor of the active site. The Mg(2+) site is built by Asn-253 and Asp-262. Asp-262 lines the ATP pocket.

Belongs to the SELO family. Mg(2+) is required as a cofactor. Requires Mn(2+) as cofactor.

The enzyme catalyses L-seryl-[protein] + ATP = 3-O-(5'-adenylyl)-L-seryl-[protein] + diphosphate. It catalyses the reaction L-threonyl-[protein] + ATP = 3-O-(5'-adenylyl)-L-threonyl-[protein] + diphosphate. The catalysed reaction is L-tyrosyl-[protein] + ATP = O-(5'-adenylyl)-L-tyrosyl-[protein] + diphosphate. It carries out the reaction L-histidyl-[protein] + UTP = N(tele)-(5'-uridylyl)-L-histidyl-[protein] + diphosphate. The enzyme catalyses L-seryl-[protein] + UTP = O-(5'-uridylyl)-L-seryl-[protein] + diphosphate. It catalyses the reaction L-tyrosyl-[protein] + UTP = O-(5'-uridylyl)-L-tyrosyl-[protein] + diphosphate. Its function is as follows. Nucleotidyltransferase involved in the post-translational modification of proteins. It can catalyze the addition of adenosine monophosphate (AMP) or uridine monophosphate (UMP) to a protein, resulting in modifications known as AMPylation and UMPylation. The chain is Protein nucleotidyltransferase YdiU from Pseudomonas aeruginosa (strain UCBPP-PA14).